Consider the following 567-residue polypeptide: Mitogen-activated protein kinase 16 (567 aa).

Residues 25–316 (YRIEEVIGKG…AEEALADVYF (292 aa)) form the Protein kinase domain. ATP-binding positions include 31–39 (IGKGSYGVV) and Lys-54. Asp-151 serves as the catalytic Proton acceptor. The residue at position 187 (Thr-187) is a Phosphothreonine. Residues 187 to 189 (TDY) carry the TXY motif. At Tyr-189 the chain carries Phosphotyrosine. Thr-192 bears the Phosphothreonine mark. Disordered stretches follow at residues 428 to 455 (AQQS…ADRN) and 512 to 567 (PAAA…SRWY). The span at 443–453 (SIRDERPRGAD) shows a compositional bias: basic and acidic residues. Polar residues predominate over residues 545-567 (KPNTQYIPQKVSAAQDTAMSRWY).

Belongs to the protein kinase superfamily. CMGC Ser/Thr protein kinase family. MAP kinase subfamily. Post-translationally, dually phosphorylated on Thr-187 and Tyr-189, which activates the enzyme.

It catalyses the reaction L-seryl-[protein] + ATP = O-phospho-L-seryl-[protein] + ADP + H(+). The catalysed reaction is L-threonyl-[protein] + ATP = O-phospho-L-threonyl-[protein] + ADP + H(+). Activated by threonine and tyrosine phosphorylation. This Arabidopsis thaliana (Mouse-ear cress) protein is Mitogen-activated protein kinase 16 (MPK16).